Here is a 396-residue protein sequence, read N- to C-terminus: Dimethyladenosine transferase 2, mitochondrial (396 aa).

A mitochondrion-targeting transit peptide spans 1–43 (MRGPAMRLPPRIALSALARGPSCILGSGAATRKDWQTRNRRGF). A disordered region spans residues 43–71 (FSDFNIEPLPDSDLEESSPWTSRNRSEPT). S-adenosyl-L-methionine is bound by residues Ile74, Glu123, and Asp149. Residues 328–329 (KR) form a DNA-binding region.

This sequence belongs to the class I-like SAM-binding methyltransferase superfamily. rRNA adenine N(6)-methyltransferase family. KsgA subfamily. As to quaternary structure, homodimer. Component of the mitochondrial transcription initiation complex, composed at least of TFB2M, TFAM and POLRMT. In this complex TFAM recruits POLRMT to the promoter whereas TFB2M induces structural changes in POLRMT to enable promoter opening and trapping of the DNA non-template strand. Interacts with mitochondrial RNA polymerase POLRMT. Interacts with TFAM. As to expression, ubiquitously expressed.

The protein localises to the mitochondrion. It carries out the reaction adenosine in rRNA + S-adenosyl-L-methionine = N(6)-methyladenosine in rRNA + S-adenosyl-L-homocysteine + H(+). Functionally, S-adenosyl-L-methionine-dependent rRNA methyltransferase which may methylate two specific adjacent adenosines in the loop of a conserved hairpin near the 3'-end of 12S mitochondrial rRNA. Component of the mitochondrial transcription initiation complex, composed at least of TFB2M, TFAM and POLRMT that is required for basal transcription of mitochondrial DNA. In this complex, TFAM recruits POLRMT to a specific promoter whereas TFB2M induces structural changes in POLRMT to enable promoter opening and trapping of the DNA non-template strand. Stimulates transcription independently of the methyltransferase activity. In Mus musculus (Mouse), this protein is Dimethyladenosine transferase 2, mitochondrial.